The following is a 115-amino-acid chain: Nucleoid-associated protein LBL_0065 (115 aa).

The protein belongs to the YbaB/EbfC family. In terms of assembly, homodimer.

The protein resides in the cytoplasm. The protein localises to the nucleoid. Functionally, binds to DNA and alters its conformation. May be involved in regulation of gene expression, nucleoid organization and DNA protection. This is Nucleoid-associated protein LBL_0065 from Leptospira borgpetersenii serovar Hardjo-bovis (strain L550).